The sequence spans 554 residues: uncharacterized protein (554 aa).

5 consecutive transmembrane segments (helical) span residues 13-31 (SVAHIVFLYAFVVAAGVYL), 36-58 (IFGVSLGVTFVLFAGILMGHFGF), 73-92 (LILFVFCIGLQVGPSFFSSF), 99-121 (LNLLAVGIVVLNIAVALGLYYLW), and 161-183 (IALGYACAYPLGVVGIIGSIIAI). 2 consecutive RCK C-terminal domains span residues 199–281 (KTQS…FIGK) and 282–366 (EVEL…VLGN). Transmembrane regions (helical) follow at residues 376 to 395 (IVTIFVGIFLGILLGSLPIA), 405 to 422 (LGLAGGPLVVAILIGRFG), 442 to 464 (IGIVLFLASVGIDAGANFVQTVV), and 468 to 490 (GLLYVGCGFLITVIPLLIIGAIA).

It belongs to the AAE transporter (TC 2.A.81) family.

The protein resides in the cell membrane. This is an uncharacterized protein from Bacteroides thetaiotaomicron (strain ATCC 29148 / DSM 2079 / JCM 5827 / CCUG 10774 / NCTC 10582 / VPI-5482 / E50).